Consider the following 269-residue polypeptide: Phosphonoacetaldehyde hydrolase (269 aa).

Aspartate 10 acts as the Nucleophile in catalysis. The Mg(2+) site is built by aspartate 10 and alanine 12. Lysine 52 acts as the Schiff-base intermediate with substrate in catalysis. A Mg(2+)-binding site is contributed by aspartate 186.

This sequence belongs to the HAD-like hydrolase superfamily. PhnX family. In terms of assembly, homodimer. Mg(2+) serves as cofactor.

The catalysed reaction is phosphonoacetaldehyde + H2O = acetaldehyde + phosphate + H(+). Functionally, involved in phosphonate degradation. This chain is Phosphonoacetaldehyde hydrolase, found in Salmonella heidelberg (strain SL476).